The sequence spans 469 residues: Citrate synthase, mitochondrial (469 aa).

Residues 1–30 (MSFLTVSRLAPKLLNSKNATYFLVAARNAS) constitute a mitochondrion transit peptide. Residues His304 and His350 contribute to the active site. Residue Arg359 participates in oxaloacetate binding. Asp405 is a catalytic residue. Arg431 and Arg451 together coordinate oxaloacetate.

It belongs to the citrate synthase family. In terms of assembly, homodimer.

It localises to the mitochondrion matrix. The enzyme catalyses oxaloacetate + acetyl-CoA + H2O = citrate + CoA + H(+). Its pathway is carbohydrate metabolism; tricarboxylic acid cycle; isocitrate from oxaloacetate: step 1/2. Its function is as follows. Key enzyme of the Krebs tricarboxylic acid cycle which catalyzes the synthesis of citrate from acetyl coenzyme A and oxaloacetate. This Xiphias gladius (Swordfish) protein is Citrate synthase, mitochondrial (cs).